The sequence spans 199 residues: Recombination protein RecR (199 aa).

Residues 58–73 (CSVCFTLSDTPVCAIC) form a C4-type zinc finger. One can recognise a Toprim domain in the interval 81 to 176 (SLLCVVEGPT…TVTRIASGMP (96 aa)).

The protein belongs to the RecR family.

Its function is as follows. May play a role in DNA repair. It seems to be involved in an RecBC-independent recombinational process of DNA repair. It may act with RecF and RecO. This is Recombination protein RecR from Desulfosudis oleivorans (strain DSM 6200 / JCM 39069 / Hxd3) (Desulfococcus oleovorans).